The chain runs to 324 residues: Hydroxylase/desaturase CTB9 (324 aa).

Over residues 1-11 the composition is skewed to polar residues; the sequence is MTSTITTTETL. Disordered regions lie at residues 1-33 and 288-308; these read MTST…KELP and TARR…EPRA.

Belongs to the asaB hydroxylase/desaturase family.

The protein operates within mycotoxin biosynthesis. Hydroxylase/desaturase; part of the gene cluster that mediates the biosynthesis of cercosporin, a light-activated, non-host-selective toxin. The perylenequinone chromophore of cercosporin absorbs light energy to attain an electronically-activated triplet state and produces active oxygen species such as the hydroxyl radical, superoxide, hydrogen peroxide or singlet oxygen upon reaction with oxygen molecules. These reactive oxygen species cause damage to various cellular components including lipids, proteins and nucleic acids. The first step of cercosporin biosynthesis is performed by the polyketide synthase CTB1 which catalyzes the formation of nor-toralactone. The starter unit acyltransferase (SAT) domain of CTB1 initiates polyketide extension by the selective utilization of acetyl-CoA, which is elongated to the heptaketide in the beta-ketoacyl synthase (KS) domain by successive condensations with six malonyl units introduced by the malonyl acyltransferase (MAT) domain. The product template (PT) domain catalyzes C4-C9 and C2-C11 aldol cyclizations and dehydrations to a trihydroxynaphthalene, which is thought to be delivered to the thioesterase (TE) domain for product release. The bifunctional enzyme CTB3 then methylates nor-toralactone to toralactone before conducting an unusual oxidative aromatic ring opening. The O-methyltransferase CTB2 further methylates the nascent OH-6 of the CBT3 product, blocking further oxidation at this site before the reductase CTB6 reduces the 2-oxopropyl ketone at position C7, giving naphthalene. The FAD-dependent monooxygenase CTB5 in concert with the multicopper oxidase CTB12 are responsible for homodimerization of naphthalene with CTB7 installing the dioxepine moiety, finally producing cercosporin. The fasciclin domain-containing protein CTB11 might act with CTB5 and CTB12 whereas the roles of CTB9 and CTB10 have still to be elucidated. The sequence is that of Hydroxylase/desaturase CTB9 from Cercospora beticola (Sugarbeet leaf spot fungus).